Reading from the N-terminus, the 151-residue chain is Chaperonin GroEL (151 aa).

41–45 (DGTTT) contacts ATP.

It belongs to the chaperonin (HSP60) family. In terms of assembly, forms a cylinder of 14 subunits composed of two heptameric rings stacked back-to-back. Interacts with the co-chaperonin GroES.

It localises to the cytoplasm. It carries out the reaction ATP + H2O + a folded polypeptide = ADP + phosphate + an unfolded polypeptide.. Together with its co-chaperonin GroES, plays an essential role in assisting protein folding. The GroEL-GroES system forms a nano-cage that allows encapsulation of the non-native substrate proteins and provides a physical environment optimized to promote and accelerate protein folding. This chain is Chaperonin GroEL, found in Mycobacteroides chelonae (Mycobacterium chelonae).